Reading from the N-terminus, the 346-residue chain is Probable RNA methyltransferase PA14_40730 (346 aa).

The active-site Proton acceptor is E91. Residues 94–320 form the Radical SAM core domain; it reads LLPRGGLCVS…TKVRNSAGQD (227 aa). Residues C101 and C325 are joined by a disulfide bond. 3 residues coordinate [4Fe-4S] cluster: C108, C112, and C115. S-adenosyl-L-methionine is bound by residues 153–154, S183, 206–208, and N282; these read GE and SLH. C325 functions as the S-methylcysteine intermediate in the catalytic mechanism.

It belongs to the radical SAM superfamily. RlmN family. [4Fe-4S] cluster serves as cofactor.

It is found in the cytoplasm. This is Probable RNA methyltransferase PA14_40730 from Pseudomonas aeruginosa (strain UCBPP-PA14).